A 296-amino-acid polypeptide reads, in one-letter code: Putative S-adenosyl-L-methionine-dependent methyltransferase MAP_3881 (296 aa).

S-adenosyl-L-methionine contacts are provided by residues Asp-121 and Asp-150 to Leu-151.

This sequence belongs to the UPF0677 family.

Its function is as follows. Exhibits S-adenosyl-L-methionine-dependent methyltransferase activity. This chain is Putative S-adenosyl-L-methionine-dependent methyltransferase MAP_3881, found in Mycolicibacterium paratuberculosis (strain ATCC BAA-968 / K-10) (Mycobacterium paratuberculosis).